The chain runs to 234 residues: UstYa family oxidase phomYd' (234 aa).

Residues 1–26 (MEKFFSPSRHNYADLSPTDVPASEES) form a disordered region. The helical transmembrane segment at 47 to 69 (VLVNRLLAASTVALVMVSLWLGW) threads the bilayer. The HXXHC 1 motif lies at 151 to 155 (HWDHC). N-linked (GlcNAc...) asparagine glycosylation is present at Asn-208.

This sequence belongs to the ustYa family.

It localises to the membrane. It functions in the pathway mycotoxin biosynthesis. UstYa family oxidase; part of the gene cluster that mediates the biosynthesis of the phomopsins, a group of hexapeptide mycotoxins which infects lupins and causes lupinosis disease in livestock. Within the pathway, phomYd' catalyzes the desaturation of the Asp moiety into 2,3-dehydroaspartic acid (dAsp). The pathway starts with the processing of the precursor phomA' by several endopeptidases including kexin proteases as well as the cluster-specific S41 family peptidase phomP1 and the oligopeptidase phomG' to produce 10 identical copies of the hexapeptide Tyr-Val-Ile-Pro-Ile-Asp. After being excised from the precursor peptide, the core peptides are cyclized and modified post-translationally by enzymes encoded within the gene cluster. The timing and order of proteolysis of the phomA' precursor and PTMs are still unknown. Two tyrosinase-like enzymes, phomQ1' and phomQ2, catalyze the chlorination and hydroxylation of Tyr, respectively. PhomYb, is proposed to be involved in the construction of the macrocyclic structure. The other 4 ustYa family proteins may be involved in PTMs that generate the unique structure of phomopsin A. PhomYa' is required for the hydroxylation of C-beta of Tyr. PhomYc', phomYd', and phomYe are responsible for the biosynthesis of 2,3-dehydroisoleucine (dIle), 2,3-dehydroaspartic acid (dAsp), and 3,4-dehydroproline (dPro), respectively. While dIle formation by phomYc' is indispensable for the installation of dAsp by phomYd', the order of the other PTMs have not been elucidated yet. Most of the biosynthetic enzymes likely have broad substrate specificity, and thus, there might be a metabolic grid from a precursor to phomopsin A. The enzyme(s) responsible for the biosynthesis of 3,4-dehydrovaline (dVal) have also not been identified yet. Finally, phomM' acts as an S-adenosylmethionine-dependent alpha-N-methyltransferase that catalyzes two successive N-methylation reactions, converting N-desmethyl-phomopsin A to phomopsin A and phomopsin A further to an N,N-dimethylated congener called phomopsin E. The polypeptide is UstYa family oxidase phomYd' (Diaporthe leptostromiformis (Lupinosis disease fungus)).